The following is a 694-amino-acid chain: Elongation factor G (694 aa).

Positions 10–285 (EKTRNIGIMA…AVLDYLPSPV (276 aa)) constitute a tr-type G domain. GTP is bound by residues 19-26 (AHIDAGKT), 83-87 (DTPGH), and 137-140 (NKMD).

This sequence belongs to the TRAFAC class translation factor GTPase superfamily. Classic translation factor GTPase family. EF-G/EF-2 subfamily.

Its subcellular location is the cytoplasm. Its function is as follows. Catalyzes the GTP-dependent ribosomal translocation step during translation elongation. During this step, the ribosome changes from the pre-translocational (PRE) to the post-translocational (POST) state as the newly formed A-site-bound peptidyl-tRNA and P-site-bound deacylated tRNA move to the P and E sites, respectively. Catalyzes the coordinated movement of the two tRNA molecules, the mRNA and conformational changes in the ribosome. This is Elongation factor G from Limosilactobacillus fermentum (strain NBRC 3956 / LMG 18251) (Lactobacillus fermentum).